The sequence spans 379 residues: Tubulin--tyrosine ligase (379 aa).

Residues T3 to Q370 form the TTL domain.

Belongs to the tubulin--tyrosine ligase family. In terms of assembly, monomer. Requires Mg(2+) as cofactor. The cofactor is K(+).

The catalysed reaction is C-terminal L-alpha-aminoacyl-L-glutamyl-L-glutamyl-[tubulin] + L-tyrosine + ATP = C-terminal L-alpha-aminoacyl-L-glutamyl-L-glutamyl-L-tyrosyl-[tubulin] + ADP + phosphate + H(+). In terms of biological role, catalyzes the post-translational addition of a tyrosine to the C-terminal end of detyrosinated alpha-tubulin. In Sus scrofa (Pig), this protein is Tubulin--tyrosine ligase (TTL).